The chain runs to 140 residues: Large ribosomal subunit protein uL14 (140 aa).

This sequence belongs to the universal ribosomal protein uL14 family.

This chain is Large ribosomal subunit protein uL14 (RPL23), found in Brugia malayi (Filarial nematode worm).